Here is a 389-residue protein sequence, read N- to C-terminus: Protein OSCP1 (389 aa).

As to expression, expressed predominantly in testis, also found in placenta and to a lesser extent in thymus and small intestine; abundantly expressed in tumor-derived cell lines. Ubiquitously expressed.

Its subcellular location is the basal cell membrane. Its function is as follows. May be involved in drug clearance in the placenta. The chain is Protein OSCP1 (OSCP1) from Homo sapiens (Human).